A 267-amino-acid polypeptide reads, in one-letter code: Methyl-coenzyme M reductase II subunit gamma (267 aa).

Arginine 123 contacts coenzyme M.

The protein belongs to the methyl-coenzyme M reductase gamma subunit family. In terms of assembly, MCR is a hexamer of two alpha, two beta, and two gamma chains, forming a dimer of heterotrimers. It depends on coenzyme F430 as a cofactor.

The enzyme catalyses coenzyme B + methyl-coenzyme M = methane + coenzyme M-coenzyme B heterodisulfide. It participates in one-carbon metabolism; methyl-coenzyme M reduction; methane from methyl-coenzyme M: step 1/1. In terms of biological role, component of the methyl-coenzyme M reductase (MCR) I that catalyzes the reductive cleavage of methyl-coenzyme M (CoM-S-CH3 or 2-(methylthio)ethanesulfonate) using coenzyme B (CoB or 7-mercaptoheptanoylthreonine phosphate) as reductant which results in the production of methane and the mixed heterodisulfide of CoB and CoM (CoM-S-S-CoB). This is the final step in methanogenesis. The chain is Methyl-coenzyme M reductase II subunit gamma (mrtG) from Methanothermus fervidus (strain ATCC 43054 / DSM 2088 / JCM 10308 / V24 S).